We begin with the raw amino-acid sequence, 408 residues long: Imidazolonepropionase (408 aa).

Residues His-73 and His-75 each coordinate Fe(3+). Residues His-73 and His-75 each contribute to the Zn(2+) site. Residues Arg-82, Tyr-145, and His-178 each contribute to the 4-imidazolone-5-propanoate site. Tyr-145 contacts N-formimidoyl-L-glutamate. A Fe(3+)-binding site is contributed by His-243. Zn(2+) is bound at residue His-243. Gln-246 contributes to the 4-imidazolone-5-propanoate binding site. Residue Asp-318 participates in Fe(3+) binding. Asp-318 is a Zn(2+) binding site. The N-formimidoyl-L-glutamate site is built by Asn-320 and Gly-322. Residue Ser-323 coordinates 4-imidazolone-5-propanoate.

This sequence belongs to the metallo-dependent hydrolases superfamily. HutI family. Requires Zn(2+) as cofactor. Fe(3+) is required as a cofactor.

The protein resides in the cytoplasm. The enzyme catalyses 4-imidazolone-5-propanoate + H2O = N-formimidoyl-L-glutamate. It participates in amino-acid degradation; L-histidine degradation into L-glutamate; N-formimidoyl-L-glutamate from L-histidine: step 3/3. Functionally, catalyzes the hydrolytic cleavage of the carbon-nitrogen bond in imidazolone-5-propanoate to yield N-formimidoyl-L-glutamate. It is the third step in the universal histidine degradation pathway. The polypeptide is Imidazolonepropionase (Shewanella piezotolerans (strain WP3 / JCM 13877)).